Reading from the N-terminus, the 25-residue chain is Small ribosomal subunit protein uS19 (25 aa).

The interval glycine 1–arginine 25 is disordered.

It belongs to the universal ribosomal protein uS19 family.

Its function is as follows. Protein S19 forms a complex with S13 that binds strongly to the 16S ribosomal RNA. This chain is Small ribosomal subunit protein uS19 (rpsS), found in Acholeplasma laidlawii.